The following is a 540-amino-acid chain: tRNA-2-methylthio-N(6)-dimethylallyladenosine synthase (540 aa).

The MTTase N-terminal domain maps to 41–157; sequence RTYEVRTFGC…LPTLLERSAH (117 aa). [4Fe-4S] cluster is bound by residues Cys50, Cys86, Cys120, Cys194, Cys198, and Cys201. One can recognise a Radical SAM core domain in the interval 180-416; that stretch reads RESAYSGWVS…IALQERIQAE (237 aa). One can recognise a TRAM domain in the interval 419 to 486; sequence KELVGTTQEL…PFFLIADGPL (68 aa).

The protein belongs to the methylthiotransferase family. MiaB subfamily. Monomer. [4Fe-4S] cluster is required as a cofactor.

It localises to the cytoplasm. The catalysed reaction is N(6)-dimethylallyladenosine(37) in tRNA + (sulfur carrier)-SH + AH2 + 2 S-adenosyl-L-methionine = 2-methylsulfanyl-N(6)-dimethylallyladenosine(37) in tRNA + (sulfur carrier)-H + 5'-deoxyadenosine + L-methionine + A + S-adenosyl-L-homocysteine + 2 H(+). In terms of biological role, catalyzes the methylthiolation of N6-(dimethylallyl)adenosine (i(6)A), leading to the formation of 2-methylthio-N6-(dimethylallyl)adenosine (ms(2)i(6)A) at position 37 in tRNAs that read codons beginning with uridine. This Corynebacterium urealyticum (strain ATCC 43042 / DSM 7109) protein is tRNA-2-methylthio-N(6)-dimethylallyladenosine synthase.